The chain runs to 126 residues: Adenosine 5'-monophosphoramidase HINT1 (126 aa).

Alanine 2 is subject to N-acetylalanine. One can recognise an HIT domain in the interval 18–126 (IFGKIIRKEI…GGRQMNWPPG (109 aa)). N6-acetyllysine is present on residues lysine 21 and lysine 30. 43–44 (DI) is an AMP binding site. Residues serine 45 and serine 72 each carry the phosphoserine modification. AMP-binding positions include asparagine 99, 105–107 (GQS), and 112–114 (HLH). The Histidine triad motif motif lies at 110–114 (HIHLH). Histidine 112 serves as the catalytic Tele-AMP-histidine intermediate.

This sequence belongs to the HINT family. Homodimer. Interacts with CDK7. Interacts with RUVBL1 and RUVBL2 and is associated with the LEF1/TCF1-CTNNB1 complex and with a KAT5 histone acetyltransferase complex. Identified in a complex with MITF and CTNNB1. Interacts with CDC34 and RBX1, and is part of a SCF (SKP2-CUL1-F-box protein) E3 ubiquitin-protein ligase complex. Interacts with SUMO1, SUMO2 and RGS17. Interacts with the Ten-1 ICD form of TENM1. Interacts with CALM1; interaction increases in the presence of calcium ions.

Its subcellular location is the cytoplasm. The protein localises to the nucleus. It catalyses the reaction adenosine 5'-phosphoramidate + H2O = AMP + NH4(+). In terms of biological role, exhibits adenosine 5'-monophosphoramidase activity, hydrolyzing purine nucleotide phosphoramidates with a single phosphate group such as adenosine 5'monophosphoramidate (AMP-NH2) to yield AMP and NH2. Hydrolyzes adenosine 5'monophosphomorpholidate (AMP-morpholidate) and guanosine 5'monophosphomorpholidate (GMP-morpholidate). Hydrolyzes lysyl-AMP (AMP-N-epsilon-(N-alpha-acetyl lysine methyl ester)) generated by lysine tRNA ligase, as well as Met-AMP, His-AMP and Asp-AMP, lysyl-GMP (GMP-N-epsilon-(N-alpha-acetyl lysine methyl ester)) and AMP-N-alanine methyl ester. Can also convert adenosine 5'-O-phosphorothioate and guanosine 5'-O-phosphorothioate to the corresponding nucleoside 5'-O-phosphates with concomitant release of hydrogen sulfide. In addition, functions as a scaffolding protein that modulates transcriptional activation by the LEF1/TCF1-CTNNB1 complex and by the complex formed with MITF and CTNNB1. Modulates p53/TP53 levels and p53/TP53-mediated apoptosis. Modulates proteasomal degradation of target proteins by the SCF (SKP2-CUL1-F-box protein) E3 ubiquitin-protein ligase complex. Also exhibits SUMO-specific isopeptidase activity, deconjugating SUMO1 from RANGAP1 and RGS17. The sequence is that of Adenosine 5'-monophosphoramidase HINT1 (Hint1) from Rattus norvegicus (Rat).